We begin with the raw amino-acid sequence, 292 residues long: Ribosomal protein L11 methyltransferase (292 aa).

T136, G159, D181, and N228 together coordinate S-adenosyl-L-methionine.

This sequence belongs to the methyltransferase superfamily. PrmA family.

Its subcellular location is the cytoplasm. It catalyses the reaction L-lysyl-[protein] + 3 S-adenosyl-L-methionine = N(6),N(6),N(6)-trimethyl-L-lysyl-[protein] + 3 S-adenosyl-L-homocysteine + 3 H(+). Methylates ribosomal protein L11. The polypeptide is Ribosomal protein L11 methyltransferase (Rhizobium etli (strain CIAT 652)).